We begin with the raw amino-acid sequence, 86 residues long: Anti-adapter protein IraP (86 aa).

A coiled-coil region spans residues 1-36 (MKNLIAELLLKLAQKEEESKELCAQVEALEIIVTAM).

The protein belongs to the IraP family. In terms of assembly, interacts with RssB.

It is found in the cytoplasm. Inhibits RpoS proteolysis by regulating RssB activity, thereby increasing the stability of the sigma stress factor RpoS especially during phosphate starvation, but also in stationary phase and during nitrogen starvation. Its effect on RpoS stability is due to its interaction with RssB, which probably blocks the interaction of RssB with RpoS, and the consequent delivery of the RssB-RpoS complex to the ClpXP protein degradation pathway. The protein is Anti-adapter protein IraP of Shigella boydii serotype 4 (strain Sb227).